The chain runs to 286 residues: Perivitellin-2 31 kDa subunit (286 aa).

A signal peptide spans 1–30; sequence MVKKIHFVMERHASIVAFLLAVLALTESQA. N-linked (GlcNAc...) asparagine glycosylation is present at Asn101.

This sequence belongs to the tectonin family. Perivitellin-2 is a dimer of heterodimers held together head-to-tail by non-covalent forces. The heterodimer is composed of the tachylectin subunit (31 kDa) and the MACPF subunit (67 kDa) that are disulfide-linked. PV2 is a very high density lipoprotein (VHDL). It contains 3.75% of lipids. The major lipid classes are free sterols and phospholipids and also have significant quantities of energy-providing triacylglycerides and free fatty acids. Produced by albumen secretory cells. Found in developing eggs.

The protein localises to the secreted. It localises to the target cell membrane. Its function is as follows. The egg defensive protein perivitellin-2 is a pore-forming two-subunit glycoprotein that affects both the nervous and digestive systems of mammals. In addition, it is a source of both structural and energetic molecules during embryonic development. The tachylectin subunit (31 kDa) binds target membranes while the MACPF subunit (67 kDa) disrupts lipid bilayers forming large pores (inner diameter of about 5.6 nm) altering the plasma membrance conductance. Both in vivo and in vitro, the protein shows wide pH range stability and is resistant to enzymatic proteolysis from gastrointestinal environments. It is cytotoxic to both epithelial and immune cells from the digestive system of mammals. It induces enterocyte death by a lytic mechanism and disrupts enterocyte monolayers in a dose-dependent manner. After oral administration to mice, it binds enterocytes and induces large dose-dependent morphological changes on their small intestine mucosa, reducing the absorptive surface. Additionally, it is detected in the Peyer's patches where it activates lymphoid follicles and triggers apoptosis. The toxin can also traverse the intestinal barrier and induce oral adaptive immunity with evidence of circulating antibody response. The toxin also shows hemagglutination properties thanks to the tachylectin subunit, but has no hemolytic activity. In addition to enterotoxin activity, the toxin also acts as a neurotoxin, since an intraperitoneal injection can induce paralysis of the mice rear limbs, followed by death. This Pomacea maculata (Giant applesnail) protein is Perivitellin-2 31 kDa subunit.